The sequence spans 712 residues: Phosphatase and actin regulator 4 (712 aa).

Disordered regions lie at residues 1–22 (MGQA…GQPT) and 90–405 (RGLL…EVPK). The stretch at 72 to 97 (EVLERKISMRKPREELVKRGLLLEDS) is one RPEL 1 repeat. A compositionally biased stretch (polar residues) spans 114–124 (NGHTTLIGSTR). Serine 125, serine 127, serine 140, and serine 156 each carry phosphoserine. A compositionally biased stretch (basic and acidic residues) spans 136 to 152 (ERIASLRKPVPEEEPKK). The segment covering 198 to 230 (ATSSGSLARPSSSASTTAITTAPAATMAATNPA) has biased composition (low complexity). A compositionally biased stretch (polar residues) spans 233 to 243 (VHSSGPPSQAP). A compositionally biased stretch (low complexity) spans 245 to 267 (TLPAAPASTHTTATLSLTHTGPA). 3 positions are modified to phosphoserine: serine 282, serine 303, and serine 353. Residues 345 to 357 (SEPLLTPSSSPLP) are compositionally biased toward low complexity. Over residues 358 to 371 (AHIPPEPPQSPPFP) the composition is skewed to pro residues. Serine 436 bears the Phosphoserine mark. Phosphothreonine is present on threonine 441. Phosphoserine occurs at positions 452, 462, 473, 524, 526, 567, and 600. Residues 507–557 (VIPKLPQCLQEEEEGKESDSDSEGPIQYRDEEDEDESHHSALANKVKRKDT) form a disordered region. Residues 516 to 528 (QEEEEGKESDSDS) are compositionally biased toward acidic residues. RPEL repeat units lie at residues 593 to 618 (NTLI…QPKN) and 631 to 656 (RRLT…RFNE). Residues 602–626 (RPTPEELEQRNILQPKNEADRQAEK) are disordered. Serine 638 is modified (phosphoserine).

The protein belongs to the phosphatase and actin regulator family. In terms of assembly, binds PPP1CA and actin.

The protein localises to the cytoplasm. It is found in the cell projection. Its subcellular location is the lamellipodium. In terms of biological role, regulator of protein phosphatase 1 (PP1) required for neural tube and optic fissure closure, and enteric neural crest cell (ENCCs) migration during development. Acts as an activator of PP1 by interacting with PPP1CA and preventing phosphorylation of PPP1CA at 'Thr-320'. During neural tube closure, localizes to the ventral neural tube and activates PP1, leading to down-regulate cell proliferation within cranial neural tissue and the neural retina. Also acts as a regulator of migration of enteric neural crest cells (ENCCs) by activating PP1, leading to dephosphorylation and subsequent activation of cofilin (COF1 or COF2) and repression of the integrin signaling through the RHO/ROCK pathway. The polypeptide is Phosphatase and actin regulator 4 (PHACTR4) (Bos taurus (Bovine)).